Consider the following 305-residue polypeptide: Probable cell division protein WhiA (305 aa).

The segment at residues 269-302 is a DNA-binding region (H-T-H motif); it reads TIKELGELLDPPLGKSGVNHRLRKLVERSNDLKK.

Belongs to the WhiA family.

Involved in cell division and chromosome segregation. This chain is Probable cell division protein WhiA, found in Lactococcus lactis subsp. cremoris (strain MG1363).